The sequence spans 231 residues: 6-hydroxymethyl-7,8-dihydropterin pyrophosphokinase (231 aa).

The protein belongs to the archaeal 6-HMPDK family. The cofactor is Mg(2+).

The catalysed reaction is 6-hydroxymethyl-7,8-dihydropterin + ATP = (7,8-dihydropterin-6-yl)methyl diphosphate + AMP + H(+). Functionally, catalyzes the transfer of diphosphate from ATP to 6-hydroxymethyl-7,8-dihydropterin (6-HMD), leading to 6-hydroxymethyl-7,8-dihydropterin diphosphate (6-HMDP). To a lesser extent, can also use CTP, UTP, and GTP as the nucleotide triphosphate substrate. The protein is 6-hydroxymethyl-7,8-dihydropterin pyrophosphokinase of Pyrococcus furiosus (strain ATCC 43587 / DSM 3638 / JCM 8422 / Vc1).